The following is a 221-amino-acid chain: MSANLAPQIVEQLDPVDGPAFQRLTGCTDAQLADLTRFQALLTEWNEVMNLVGPATLPTYWNRHAWDSAQLLKLAPDARTWADLGAGAGLPGVVLAILLKGTPGAKIHLVESMTKRCKFLRAVADALDLPVEIHNARAEELDLKVEIVTARACAPMVRLLGYAQPYLKRGATAWFLKGQDVASELAEAATYWKFESDLRPSLSDPRGQIVQVKGLKSVRKV.

S-adenosyl-L-methionine is bound by residues Gly85, Leu90, 138–139 (AE), and Arg151.

Belongs to the methyltransferase superfamily. RNA methyltransferase RsmG family.

It localises to the cytoplasm. It carries out the reaction guanosine(527) in 16S rRNA + S-adenosyl-L-methionine = N(7)-methylguanosine(527) in 16S rRNA + S-adenosyl-L-homocysteine. Functionally, specifically methylates the N7 position of guanine in position 527 of 16S rRNA. The sequence is that of Ribosomal RNA small subunit methyltransferase G from Caulobacter sp. (strain K31).